We begin with the raw amino-acid sequence, 1257 residues long: Putative structural protein ORF146 (1257 aa).

It belongs to the ascovirus HvAV ORF146 family.

It localises to the virion. This Noctuidae (owlet moths) protein is Putative structural protein ORF146.